The sequence spans 896 residues: Histone-lysine N-methyltransferase CLF (896 aa).

Disordered stretches follow at residues 344-419 (DNLK…NRRI) and 459-514 (SGIK…DGCD). Residues 358–390 (GSSGQKTKSQQSESSSTARVSSESSESEVQLLS) are compositionally biased toward low complexity. Polar residues-rich tracts occupy residues 391-400 (NKSPQHSPGL), 465-476 (VVSSQCNSPSTR), and 485-498 (QMEN…AQSD). Over residues 504 to 514 (NNEHSATDGCD) the composition is skewed to basic and acidic residues. A CXC domain is found at 633-732 (RKRITERKDQ…TLGVPNQRGD (100 aa)). The 116-residue stretch at 747 to 862 (QRVLLGRSDV…AGEELFYDYR (116 aa)) folds into the SET domain. Position 861 (tyrosine 861) interacts with S-adenosyl-L-methionine. Basic and acidic residues predominate over residues 869–884 (PAWARKPEGPGAKDDA). Residues 869-896 (PAWARKPEGPGAKDDAQPSTGRAKKLAH) form a disordered region.

The protein belongs to the class V-like SAM-binding methyltransferase superfamily. Histone-lysine methyltransferase family. EZ subfamily. Interacts with FIE1. Component of the polycomb repressive complex 2 (PRC2), composed of the core PRC2 components FIE2, EMF2B and EZ1. PRC2 methylates 'Lys-27' residues of histone H3 (H3K27me3), leading to transcriptional repression of the affected target gene. As to expression, widely expressed. Highly expressed in young panicle.

The catalysed reaction is L-lysyl(27)-[histone H3] + 3 S-adenosyl-L-methionine = N(6),N(6),N(6)-trimethyl-L-lysyl(27)-[histone H3] + 3 S-adenosyl-L-homocysteine + 3 H(+). Functionally, polycomb group (PcG) protein. Catalytic subunit of some PcG multiprotein complex, which methylates 'Lys-27' of histone H3, leading to transcriptional repression of the affected target genes. PcG proteins act by forming multiprotein complexes, which are required to maintain the transcriptionally repressive state of homeotic genes throughout development. PcG proteins are not required to initiate repression, but to maintain it during later stages of development. Involved in the regulation of flowering. Represses flowering under long day (LD) conditions. Regulates the trimethylation on histone H3 'Lys-27' (H3K27me3) of the flowering regulators MADS14, MADS15, RFT1, EHD1, HD3A and LF. This chain is Histone-lysine N-methyltransferase CLF, found in Oryza sativa subsp. japonica (Rice).